The primary structure comprises 320 residues: Variant surface glycoprotein ILTAT 1.2 (320 aa).

N-linked (GlcNAc...) asparagine glycosylation is found at N146, N282, and N295. The disordered stretch occupies residues 297 to 320; sequence TKATENGVPVAQTQTGGSETTTEK. Positions 308-320 are enriched in low complexity; it reads QTQTGGSETTTEK.

It localises to the cell membrane. In terms of biological role, VSG forms a coat on the surface of the parasite. The trypanosome evades the immune response of the host by expressing a series of antigenically distinct VSGs from an estimated 1000 VSG genes. The sequence is that of Variant surface glycoprotein ILTAT 1.2 from Trypanosoma brucei brucei.